We begin with the raw amino-acid sequence, 85 residues long: Large ribosomal subunit protein bL27 (85 aa).

Belongs to the bacterial ribosomal protein bL27 family.

This Pseudomonas fluorescens (strain ATCC BAA-477 / NRRL B-23932 / Pf-5) protein is Large ribosomal subunit protein bL27.